Consider the following 35-residue polypeptide: uncharacterized protein (35 aa).

This is an uncharacterized protein from Haemophilus influenzae (strain ATCC 51907 / DSM 11121 / KW20 / Rd).